Reading from the N-terminus, the 474-residue chain is UDP-N-acetylmuramate--L-alanine ligase (474 aa).

115–121 (GTHGKTT) provides a ligand contact to ATP.

This sequence belongs to the MurCDEF family.

Its subcellular location is the cytoplasm. The enzyme catalyses UDP-N-acetyl-alpha-D-muramate + L-alanine + ATP = UDP-N-acetyl-alpha-D-muramoyl-L-alanine + ADP + phosphate + H(+). The protein operates within cell wall biogenesis; peptidoglycan biosynthesis. Functionally, cell wall formation. This chain is UDP-N-acetylmuramate--L-alanine ligase, found in Novosphingobium aromaticivorans (strain ATCC 700278 / DSM 12444 / CCUG 56034 / CIP 105152 / NBRC 16084 / F199).